A 199-amino-acid polypeptide reads, in one-letter code: Peroxiredoxin-1 (199 aa).

Ser-2 carries the post-translational modification N-acetylserine. Residues 6-165 form the Thioredoxin domain; it reads AKIGHRAPQF…TLRLVQAFQF (160 aa). Lys-7 carries the N6-acetyllysine; alternate modification. Lys-7 is covalently cross-linked (Glycyl lysine isopeptide (Lys-Gly) (interchain with G-Cter in SUMO2); alternate). N6-acetyllysine occurs at positions 16 and 27. Residue Lys-35 is modified to N6-acetyllysine; alternate. Residue Lys-35 is modified to N6-succinyllysine; alternate. Cys-52 (cysteine sulfenic acid (-SOH) intermediate) is an active-site residue. At Thr-90 the chain carries Phosphothreonine. Residue Lys-120 forms a Glycyl lysine isopeptide (Lys-Gly) (interchain with G-Cter in SUMO2) linkage. N6-acetyllysine is present on Lys-136. The segment at 176–199 is disordered; the sequence is GWKPGSDTIKPDVQKSKEYFSKQK. The span at 184–199 shows a compositional bias: basic and acidic residues; the sequence is IKPDVQKSKEYFSKQK. A Glycyl lysine isopeptide (Lys-Gly) (interchain with G-Cter in SUMO1) cross-link involves residue Lys-185. Lys-197 bears the N6-acetyllysine mark.

It belongs to the peroxiredoxin family. AhpC/Prx1 subfamily. As to quaternary structure, homodimer; disulfide-linked, upon oxidation. 5 homodimers assemble to form a ring-like decamer. Interacts with GDPD5; forms a mixed-disulfide with GDPD5. Interacts with SESN1 and SESN2. Interacts with FAM107A. In terms of processing, phosphorylated on Thr-90 during the M-phase, which leads to a decrease in enzymatic activity. Acetylation increases reducing activity and resistance to superoxidation. Deacetylated by HDAC6 which decreases reducing activity.

The protein localises to the cytoplasm. It catalyses the reaction a hydroperoxide + [thioredoxin]-dithiol = an alcohol + [thioredoxin]-disulfide + H2O. Thiol-specific peroxidase that catalyzes the reduction of hydrogen peroxide and organic hydroperoxides to water and alcohols, respectively. Plays a role in cell protection against oxidative stress by detoxifying peroxides and as sensor of hydrogen peroxide-mediated signaling events. Might participate in the signaling cascades of growth factors and tumor necrosis factor-alpha by regulating the intracellular concentrations of H(2)O(2). Reduces an intramolecular disulfide bond in GDPD5 that gates the ability to GDPD5 to drive postmitotic motor neuron differentiation. The protein is Peroxiredoxin-1 (PRDX1) of Bos taurus (Bovine).